A 351-amino-acid polypeptide reads, in one-letter code: Uroporphyrinogen decarboxylase (351 aa).

Substrate is bound by residues 26–30 (RQAGR), Phe-45, Asp-76, Tyr-153, Ser-208, and His-323.

The protein belongs to the uroporphyrinogen decarboxylase family. In terms of assembly, homodimer.

Its subcellular location is the cytoplasm. The enzyme catalyses uroporphyrinogen III + 4 H(+) = coproporphyrinogen III + 4 CO2. Its pathway is porphyrin-containing compound metabolism; protoporphyrin-IX biosynthesis; coproporphyrinogen-III from 5-aminolevulinate: step 4/4. Functionally, catalyzes the decarboxylation of four acetate groups of uroporphyrinogen-III to yield coproporphyrinogen-III. The polypeptide is Uroporphyrinogen decarboxylase (Prochlorococcus marinus (strain SARG / CCMP1375 / SS120)).